A 356-amino-acid polypeptide reads, in one-letter code: tRNA N6-adenosine threonylcarbamoyltransferase (356 aa).

H115 and H119 together coordinate Fe cation. Residues 138 to 142, D171, G184, and N283 contribute to the substrate site; that span reads LVSGG. D311 contributes to the Fe cation binding site.

The protein belongs to the KAE1 / TsaD family. Requires Fe(2+) as cofactor.

It is found in the cytoplasm. It carries out the reaction L-threonylcarbamoyladenylate + adenosine(37) in tRNA = N(6)-L-threonylcarbamoyladenosine(37) in tRNA + AMP + H(+). Required for the formation of a threonylcarbamoyl group on adenosine at position 37 (t(6)A37) in tRNAs that read codons beginning with adenine. Is involved in the transfer of the threonylcarbamoyl moiety of threonylcarbamoyl-AMP (TC-AMP) to the N6 group of A37, together with TsaE and TsaB. TsaD likely plays a direct catalytic role in this reaction. The protein is tRNA N6-adenosine threonylcarbamoyltransferase of Prochlorococcus marinus (strain SARG / CCMP1375 / SS120).